The chain runs to 252 residues: Ribosomal RNA small subunit methyltransferase J (252 aa).

S-adenosyl-L-methionine contacts are provided by residues 101–102 (RD), 117–118 (ER), 153–154 (SS), and Asp171.

It belongs to the methyltransferase superfamily. RsmJ family.

The protein localises to the cytoplasm. The enzyme catalyses guanosine(1516) in 16S rRNA + S-adenosyl-L-methionine = N(2)-methylguanosine(1516) in 16S rRNA + S-adenosyl-L-homocysteine + H(+). Functionally, specifically methylates the guanosine in position 1516 of 16S rRNA. The protein is Ribosomal RNA small subunit methyltransferase J of Citrobacter koseri (strain ATCC BAA-895 / CDC 4225-83 / SGSC4696).